We begin with the raw amino-acid sequence, 230 residues long: MSERAPVVTVDGPSGAGKGTISQLLAERLGYKLLDSGAIYRVLALAAIHHNVELDNEEALTLLAAHLDVQFVTGNESKGIKVVLEGEDVSITIRSQECSNAASKVAAFPRVREALLRRQRAFAEAPGLIADGRDMGTIVFPTTPAKLYLTASAEERAQRRYNQLQDKGFDVNIDQLLSEIKERDDRDMNRSVAPLVPAEDALIIDTTNINIEDVLDLALTHIHQKLQVPA.

ATP is bound at residue 12–20; the sequence is GPSGAGKGT.

Belongs to the cytidylate kinase family. Type 1 subfamily.

Its subcellular location is the cytoplasm. The catalysed reaction is CMP + ATP = CDP + ADP. The enzyme catalyses dCMP + ATP = dCDP + ADP. The sequence is that of Cytidylate kinase from Shewanella pealeana (strain ATCC 700345 / ANG-SQ1).